The sequence spans 232 residues: Protein Mis18-alpha (232 aa).

A phosphoserine mark is found at S36, S39, and S40. The region spanning 79–177 (PLVFLCSGCR…SVEAIESYIL (99 aa)) is the Mis18 domain. Zn(2+)-binding residues include C84, C87, C140, and C143. K161 is covalently cross-linked (Glycyl lysine isopeptide (Lys-Gly) (interchain with G-Cter in SUMO2)). Phosphoserine is present on S232.

The protein belongs to the mis18 family. Homodimer, and heterodimer with OIP5/MIS18B. Identified in a complex containing MIS18A, OIP5/MIS18B, MIS18BP1, RBBP7 and RBBP4.

It is found in the nucleus. It localises to the chromosome. Its subcellular location is the centromere. In terms of biological role, required for recruitment of CENPA to centromeres and normal chromosome segregation during mitosis. The polypeptide is Protein Mis18-alpha (MIS18A) (Otolemur garnettii (Small-eared galago)).